Reading from the N-terminus, the 345-residue chain is Trace amine-associated receptor 6 (345 aa).

Topologically, residues 1-32 (MSSNSSLLVAVQLCYPNVNGSCVETLYSPGSR) are extracellular. N-linked (GlcNAc...) asparagine glycosylation is found at asparagine 4 and asparagine 19. Disulfide bonds link cysteine 22/cysteine 186 and cysteine 105/cysteine 190. The chain crosses the membrane as a helical span at residues 33 to 53 (VILYIVFGFGAVLAVFGNLLV). Residues 54-68 (MISILHFKQLHSPTN) lie on the Cytoplasmic side of the membrane. Residues 69 to 89 (FLVASLACADFLVGVTVMPFS) form a helical membrane-spanning segment. At 90–107 (MVRTVESCWYFGRSFCTF) the chain is on the extracellular side. Residues 108–128 (HTCCDVAFCYSSLFHLCFISI) form a helical membrane-spanning segment. Residues 129-147 (DRYIAVTDPLVYPTKFTVS) lie on the Cytoplasmic side of the membrane. A helical membrane pass occupies residues 148–168 (VSGICISVSWILPLMYSGAVF). Topologically, residues 169 to 202 (YTGVYDDGLEELSDALNCIGGCQTVVNQNWVLID) are extracellular. A helical membrane pass occupies residues 203 to 223 (CLSFFIPTFIMIILYGNIFLV). Residues 224–259 (ARRQAKKIENTGSKTESSSESYKARVARRERKAAKT) are Cytoplasmic-facing. Residues 260-276 (LGVTVVAFMISWLPYSI) form a helical membrane-spanning segment. The Extracellular segment spans residues 277 to 282 (DSLIDA). A helical transmembrane segment spans residues 283–302 (FMGFITPAYIYEICCWCAYY). The Cytoplasmic portion of the chain corresponds to 303 to 345 (NSAMNPLIYALFYPWFRKAIKVIVTGQVLKNSSATMNLFSEHI).

Belongs to the G-protein coupled receptor 1 family.

It is found in the cell membrane. Its function is as follows. Olfactory receptor specific for trace amines, such as beta-phenylethylamine (beta-PEA). Trace amine compounds are enriched in animal body fluids and act on trace amine-associated receptors (TAARs) to elicit both intraspecific and interspecific innate behaviors. Beta-PEA-binding causes a conformation change that triggers signaling via G(s)-class of G alpha proteins (GNAL or GNAS). This chain is Trace amine-associated receptor 6 (TAAR6), found in Pan troglodytes (Chimpanzee).